Here is a 351-residue protein sequence, read N- to C-terminus: Ferredoxin--NADP reductase (351 aa).

Asp-44, Gln-52, Tyr-57, Val-97, Phe-132, Asp-296, and Ser-337 together coordinate FAD.

This sequence belongs to the ferredoxin--NADP reductase type 2 family. Homodimer. FAD serves as cofactor.

It catalyses the reaction 2 reduced [2Fe-2S]-[ferredoxin] + NADP(+) + H(+) = 2 oxidized [2Fe-2S]-[ferredoxin] + NADPH. The chain is Ferredoxin--NADP reductase from Paraburkholderia phymatum (strain DSM 17167 / CIP 108236 / LMG 21445 / STM815) (Burkholderia phymatum).